The following is a 458-amino-acid chain: UDP-N-acetylmuramoylalanine--D-glutamate ligase (458 aa).

124–130 (GSDGKTT) lines the ATP pocket.

This sequence belongs to the MurCDEF family.

It is found in the cytoplasm. The catalysed reaction is UDP-N-acetyl-alpha-D-muramoyl-L-alanine + D-glutamate + ATP = UDP-N-acetyl-alpha-D-muramoyl-L-alanyl-D-glutamate + ADP + phosphate + H(+). The protein operates within cell wall biogenesis; peptidoglycan biosynthesis. In terms of biological role, cell wall formation. Catalyzes the addition of glutamate to the nucleotide precursor UDP-N-acetylmuramoyl-L-alanine (UMA). This Clostridium botulinum (strain ATCC 19397 / Type A) protein is UDP-N-acetylmuramoylalanine--D-glutamate ligase.